The primary structure comprises 470 residues: FLYWCH transcription factor 2 (470 aa).

Residues 102–148 (SQLISEDTRPSASSSPSSTATAVSNSGQSNATSTSSSSTEPEYKPRN) are disordered. Residues 111-140 (PSASSSPSSTATAVSNSGQSNATSTSSSST) are compositionally biased toward low complexity. The segment at 145–204 (KPRNVREKVYADGYIMSFDKKSCCGTKEFWRCERKNDCNARMHSDINTREIVRKLHPHNH) adopts an FLYWCH-type zinc-finger fold.

Functionally, probable transcription factor. May bind to the promoters of target genes, including micro-RNA genes, in order to repress expression, and acting redundantly with flh-1 and flh-3. The polypeptide is FLYWCH transcription factor 2 (Caenorhabditis elegans).